The sequence spans 434 residues: CinA-like protein (434 aa).

It belongs to the CinA family.

In Mycolicibacterium paratuberculosis (strain ATCC BAA-968 / K-10) (Mycobacterium paratuberculosis), this protein is CinA-like protein.